A 677-amino-acid polypeptide reads, in one-letter code: Potassium channel KAT1 (677 aa).

Residues 1–63 (MSISWTRNFF…PFNPRYRAWE (63 aa)) are Cytoplasmic-facing. Residues 64-84 (MWLVLLVIYSAWICPFQFAFI) traverse the membrane as a helical segment. Residues 85–90 (TYKKDA) lie on the Extracellular side of the membrane. Residues 91–111 (IFIIDNIVNGFFAIDIILTFF) form a helical membrane-spanning segment. Over 112–134 (VAYLDSHSYLLVDSPKKIAIRYL) the chain is Cytoplasmic. A helical transmembrane segment spans residues 135–155 (STWFAFDVCSTAPFQPLSLLF). Residues 156 to 165 (NYNGSELGFR) are Extracellular-facing. Residues 166-186 (ILSMLRLWRLRRVSSLFARLE) form a helical; Voltage-sensor membrane-spanning segment. Residues 187–200 (KDIRFNYFWIRCTK) are Cytoplasmic-facing. The helical transmembrane segment at 201–221 (LISVTLFAIHCAGCFNYLIAD) threads the bilayer. At 222-248 (RYPNPRKTWIGAVYPNFKEASLWNRYV) the chain is on the extracellular side. The segment at residues 249–268 (TALYWSITTLTTTGYGDFHA) is an intramembrane region (pore-forming). Topologically, residues 269–272 (ENPR) are extracellular. The helical transmembrane segment at 273 to 293 (EMLFDIFFMMFNLGLTAYLIG) threads the bilayer. Residues 294–677 (NMTNLVVHWT…DGDHLYFSSN (384 aa)) lie on the Cytoplasmic side of the membrane. An a nucleoside 3',5'-cyclic phosphate-binding site is contributed by 377–496 (LFQGVSRNFL…RVIMNNLFMK (120 aa)). The span at 568–577 (IERAKVERSS) shows a compositional bias: basic and acidic residues. Residues 568-601 (IERAKVERSSSETAGRSYANDSSKKDPYCSSSNQ) are disordered. The KHA domain occupies 612–677 (RVTIHMMSES…DGDHLYFSSN (66 aa)).

It belongs to the potassium channel family. Plant (TC 1.A.1.4) subfamily. As to quaternary structure, the potassium channel is probably composed of a homo- or heterotetrameric complex of pore-forming subunits. May interact with AKT2 and KAT2. Interacts with SLAC1 and SLAH3. As to expression, expressed in guard cells, and in roots.

The protein resides in the membrane. Highly selective inward-rectifying potassium channel. This voltage-gated channel could mediate long-term potassium influx into guard cells leading to stomatal opening. Assuming opened or closed conformations in response to the voltage difference across the membrane, the channel is activated by hyperpolarization. The channel activity is enhanced upon external acidification. Also permeable to ammonium ions. Blocked by tetraethylammonium and barium ions. The polypeptide is Potassium channel KAT1 (KAT1) (Arabidopsis thaliana (Mouse-ear cress)).